Here is a 171-residue protein sequence, read N- to C-terminus: Crossover junction endodeoxyribonuclease RuvC (171 aa).

Active-site residues include Asp-7, Glu-67, and Asp-139. Positions 7, 67, and 139 each coordinate Mg(2+).

It belongs to the RuvC family. Homodimer which binds Holliday junction (HJ) DNA. The HJ becomes 2-fold symmetrical on binding to RuvC with unstacked arms; it has a different conformation from HJ DNA in complex with RuvA. In the full resolvosome a probable DNA-RuvA(4)-RuvB(12)-RuvC(2) complex forms which resolves the HJ. The cofactor is Mg(2+).

It localises to the cytoplasm. It carries out the reaction Endonucleolytic cleavage at a junction such as a reciprocal single-stranded crossover between two homologous DNA duplexes (Holliday junction).. The RuvA-RuvB-RuvC complex processes Holliday junction (HJ) DNA during genetic recombination and DNA repair. Endonuclease that resolves HJ intermediates. Cleaves cruciform DNA by making single-stranded nicks across the HJ at symmetrical positions within the homologous arms, yielding a 5'-phosphate and a 3'-hydroxyl group; requires a central core of homology in the junction. The consensus cleavage sequence is 5'-(A/T)TT(C/G)-3'. Cleavage occurs on the 3'-side of the TT dinucleotide at the point of strand exchange. HJ branch migration catalyzed by RuvA-RuvB allows RuvC to scan DNA until it finds its consensus sequence, where it cleaves and resolves the cruciform DNA. The sequence is that of Crossover junction endodeoxyribonuclease RuvC from Geotalea uraniireducens (strain Rf4) (Geobacter uraniireducens).